A 546-amino-acid chain; its full sequence is RuBisCO large subunit-binding protein subunit alpha, chloroplastic (546 aa).

A chloroplast-targeting transit peptide spans arginine 1–alanine 6. Serine 50 is subject to Phosphoserine.

Belongs to the chaperonin (HSP60) family. Oligomer of probably six alpha and six beta subunits.

It localises to the plastid. The protein resides in the chloroplast. Functionally, this protein binds RuBisCO small and large subunits and is implicated in the assembly of the enzyme oligomer. The polypeptide is RuBisCO large subunit-binding protein subunit alpha, chloroplastic (Brassica napus (Rape)).